A 255-amino-acid chain; its full sequence is Diphthine--ammonia ligase (255 aa).

This sequence belongs to the Diphthine--ammonia ligase family.

The catalysed reaction is diphthine-[translation elongation factor 2] + NH4(+) + ATP = diphthamide-[translation elongation factor 2] + AMP + diphosphate + H(+). Its pathway is protein modification; peptidyl-diphthamide biosynthesis. Amidase that catalyzes the last step of diphthamide biosynthesis using ammonium and ATP. Diphthamide biosynthesis consists in the conversion of an L-histidine residue in the translation elongation factor eEF-2 (EEF2) to diphthamide. In Danio rerio (Zebrafish), this protein is Diphthine--ammonia ligase (dph6).